A 428-amino-acid chain; its full sequence is Enolase (428 aa).

Gln163 contributes to the (2R)-2-phosphoglycerate binding site. The active-site Proton donor is Glu205. Mg(2+)-binding residues include Asp242, Glu285, and Asp312. (2R)-2-phosphoglycerate-binding residues include Lys337, Arg366, Ser367, and Lys388. Lys337 serves as the catalytic Proton acceptor.

The protein belongs to the enolase family. Requires Mg(2+) as cofactor.

It is found in the cytoplasm. Its subcellular location is the secreted. The protein localises to the cell surface. The enzyme catalyses (2R)-2-phosphoglycerate = phosphoenolpyruvate + H2O. It functions in the pathway carbohydrate degradation; glycolysis; pyruvate from D-glyceraldehyde 3-phosphate: step 4/5. Its function is as follows. Catalyzes the reversible conversion of 2-phosphoglycerate (2-PG) into phosphoenolpyruvate (PEP). It is essential for the degradation of carbohydrates via glycolysis. The sequence is that of Enolase from Brevibacillus brevis (strain 47 / JCM 6285 / NBRC 100599).